Here is a 356-residue protein sequence, read N- to C-terminus: UDP-N-acetylglucosamine--N-acetylmuramyl-(pentapeptide) pyrophosphoryl-undecaprenol N-acetylglucosamine transferase (356 aa).

UDP-N-acetyl-alpha-D-glucosamine-binding positions include 12 to 14 (TGG), asparagine 124, arginine 163, serine 188, isoleucine 242, 261 to 266 (ALTVSE), and glutamine 287.

This sequence belongs to the glycosyltransferase 28 family. MurG subfamily.

The protein localises to the cell inner membrane. The enzyme catalyses di-trans,octa-cis-undecaprenyl diphospho-N-acetyl-alpha-D-muramoyl-L-alanyl-D-glutamyl-meso-2,6-diaminopimeloyl-D-alanyl-D-alanine + UDP-N-acetyl-alpha-D-glucosamine = di-trans,octa-cis-undecaprenyl diphospho-[N-acetyl-alpha-D-glucosaminyl-(1-&gt;4)]-N-acetyl-alpha-D-muramoyl-L-alanyl-D-glutamyl-meso-2,6-diaminopimeloyl-D-alanyl-D-alanine + UDP + H(+). The protein operates within cell wall biogenesis; peptidoglycan biosynthesis. Its function is as follows. Cell wall formation. Catalyzes the transfer of a GlcNAc subunit on undecaprenyl-pyrophosphoryl-MurNAc-pentapeptide (lipid intermediate I) to form undecaprenyl-pyrophosphoryl-MurNAc-(pentapeptide)GlcNAc (lipid intermediate II). The chain is UDP-N-acetylglucosamine--N-acetylmuramyl-(pentapeptide) pyrophosphoryl-undecaprenol N-acetylglucosamine transferase from Azotobacter vinelandii (strain DJ / ATCC BAA-1303).